The following is a 298-amino-acid chain: Ribosomal RNA small subunit methyltransferase H (298 aa).

S-adenosyl-L-methionine contacts are provided by residues 31 to 33 (GGH), Asp50, Tyr80, Asp95, and Gln102. The disordered stretch occupies residues 255–298 (AEKDLYGNTNKPFKSVGKAIDPDDEEKERNNRARSARLRIAERE).

This sequence belongs to the methyltransferase superfamily. RsmH family.

The protein resides in the cytoplasm. It catalyses the reaction cytidine(1402) in 16S rRNA + S-adenosyl-L-methionine = N(4)-methylcytidine(1402) in 16S rRNA + S-adenosyl-L-homocysteine + H(+). Specifically methylates the N4 position of cytidine in position 1402 (C1402) of 16S rRNA. This chain is Ribosomal RNA small subunit methyltransferase H, found in Cytophaga hutchinsonii (strain ATCC 33406 / DSM 1761 / CIP 103989 / NBRC 15051 / NCIMB 9469 / D465).